The sequence spans 670 residues: MNTSPDYAQPGPNQFHHGAPSIYSSSSSNGVGGEVPITAQLLRGPPPPPPPPPTATATAATAAATTTTAAPSATGEPKQSGPTVPAACLACRSKHLKCDGGNPCARCQASESICQYVASRRGYKGPRRNGTQNPNKRHAAASDDGSPNSNGSNESCPMLLGAGVATPAAPSLSAFNPGLGIPETPMSTIGATPSYSGLQIYRQPYLDANGALVDINPRKAPQTIAERCIDSFYFHFFPGHPSVLPKDYLLRIAEQRNIEHLLAAMRWAGSLYFEVGPTRATFFEEAMRLMYAKDVPKDGFLVQAMLIVLVGLDGSCQQERARDILSDAERIAIEIGLFQRSFAAIHGQGIPVIEESWRRTWWDLFVVDGMVAGVHRQTNFLLFDIVADAGLPCEEHQYLAGTIPRPLYLDDFDNDIFSGEEYEFSSFAYRVASIRNLGRMMRLPESVFPGDNNVDRVENFLSNWRMHLPASKRDCLNKDMKLDEMMFQAWMINHACSIMLHQPLSQLDSSPARDVTSCAPYQMVRSGDTFNTHTRHIVTAAAEISKMVTYAVPITCHTHFFTCVLTLSSIVHLSKWALWFVQNDDDLRQQIRLNIGALNKLSTVWSAASRASGQVKGVAQEIFRSKKAAQQNNASFWVGFTQEEIISSMAADETIMSEINTMLEPVTTSG.

A disordered region spans residues 1–84 (MNTSPDYAQP…GEPKQSGPTV (84 aa)). Residues 44 to 54 (GPPPPPPPPPT) show a composition bias toward pro residues. Over residues 55–74 (ATATAATAAATTTTAAPSAT) the composition is skewed to low complexity. A DNA-binding region (zn(2)-C6 fungal-type) is located at residues 88–114 (CLACRSKHLKCDGGNPCARCQASESIC). The interval 122-157 (GYKGPRRNGTQNPNKRHAAASDDGSPNSNGSNESCP) is disordered. The segment covering 142-155 (SDDGSPNSNGSNES) has biased composition (low complexity).

The protein localises to the nucleus. Transcription factor; part of the gene cluster that mediates the biosynthesis of iso-A82775C, a enylepoxycyclohexane and biosynthetic precursor of the chloropestolide anticancer natural products. This is C6 finger domain transcription factor iacK from Pestalotiopsis fici (strain W106-1 / CGMCC3.15140).